Reading from the N-terminus, the 490-residue chain is Pleckstrin homology domain-containing family O member 2 (490 aa).

In terms of domain architecture, PH spans 18–119 (MVDKAGWIKK…WIKALNEGIN (102 aa)). 2 positions are modified to phosphoserine: serine 164 and serine 167. The disordered stretch occupies residues 173 to 402 (LDLDVPDSGP…DLLGEGPRHP (230 aa)). Over residues 230–243 (APTPVSASSEVSPE) the composition is skewed to low complexity. Threonine 232 is modified (phosphothreonine). Phosphoserine occurs at positions 235, 237, and 238. Over residues 244-257 (SQEDSETPAEEDSG) the composition is skewed to acidic residues. Serine 273 bears the Phosphoserine mark. The span at 277 to 297 (PSPQEAPAAESAEPSQAPCSE) shows a compositional bias: low complexity. 2 positions are modified to phosphothreonine: threonine 298 and threonine 311. Residues serine 390 and serine 468 each carry the phosphoserine modification. Residues 439-481 (SAETLLSQAVEQLRQATQVLQEMRDLGELSQEAPGLREKRKEL) are a coiled coil.

This Homo sapiens (Human) protein is Pleckstrin homology domain-containing family O member 2 (PLEKHO2).